A 137-amino-acid chain; its full sequence is Large ribosomal subunit protein uL16 (137 aa).

This sequence belongs to the universal ribosomal protein uL16 family. As to quaternary structure, part of the 50S ribosomal subunit.

In terms of biological role, binds 23S rRNA and is also seen to make contacts with the A and possibly P site tRNAs. This chain is Large ribosomal subunit protein uL16, found in Bartonella bacilliformis (strain ATCC 35685 / KC583 / Herrer 020/F12,63).